The sequence spans 702 residues: Methionine--tRNA ligase (702 aa).

The 'HIGH' region motif lies at 14 to 24; that stretch reads PYANGPVHLGH. Zn(2+) contacts are provided by C146, C149, C159, and C162. A 'KMSKS' region motif is present at residues 344–348; sequence KFSKS. ATP is bound at residue K347. The tRNA-binding domain maps to 601-702; that stretch reads DFQKVDLRAA…GEKINGSSVQ (102 aa).

This sequence belongs to the class-I aminoacyl-tRNA synthetase family. MetG type 1 subfamily. In terms of assembly, homodimer. Requires Zn(2+) as cofactor.

Its subcellular location is the cytoplasm. The catalysed reaction is tRNA(Met) + L-methionine + ATP = L-methionyl-tRNA(Met) + AMP + diphosphate. Functionally, is required not only for elongation of protein synthesis but also for the initiation of all mRNA translation through initiator tRNA(fMet) aminoacylation. This Chlorobium phaeovibrioides (strain DSM 265 / 1930) (Prosthecochloris vibrioformis (strain DSM 265)) protein is Methionine--tRNA ligase.